A 74-amino-acid chain; its full sequence is UPF0154 protein OB1676 (74 aa).

Residues I4 to I24 form a helical membrane-spanning segment.

Belongs to the UPF0154 family.

It is found in the membrane. This chain is UPF0154 protein OB1676, found in Oceanobacillus iheyensis (strain DSM 14371 / CIP 107618 / JCM 11309 / KCTC 3954 / HTE831).